Reading from the N-terminus, the 227-residue chain is Octanoyltransferase (227 aa).

A BPL/LPL catalytic domain is found at 35 to 210; sequence DKTPDEIWLV…TFLQLVGYSA (176 aa). Substrate is bound by residues 74-81, 141-143, and 154-156; these read RGGQVTYH, SLG, and GLA. Cysteine 172 serves as the catalytic Acyl-thioester intermediate.

Belongs to the LipB family.

Its subcellular location is the cytoplasm. It carries out the reaction octanoyl-[ACP] + L-lysyl-[protein] = N(6)-octanoyl-L-lysyl-[protein] + holo-[ACP] + H(+). The protein operates within protein modification; protein lipoylation via endogenous pathway; protein N(6)-(lipoyl)lysine from octanoyl-[acyl-carrier-protein]: step 1/2. Its function is as follows. Catalyzes the transfer of endogenously produced octanoic acid from octanoyl-acyl-carrier-protein onto the lipoyl domains of lipoate-dependent enzymes. Lipoyl-ACP can also act as a substrate although octanoyl-ACP is likely to be the physiological substrate. This chain is Octanoyltransferase, found in Pectobacterium atrosepticum (strain SCRI 1043 / ATCC BAA-672) (Erwinia carotovora subsp. atroseptica).